A 123-amino-acid chain; its full sequence is Immunoglobulin heavy variable 4-34 (123 aa).

A signal peptide spans 1 to 26 (MDLLHKNMKHLWFFLLLVAAPRWVLS). The segment at 26–123 (SQVQLQQWGA…ADTAVYYCAR (98 aa)) is v region. Residues 27–51 (QVQLQQWGAGLLKPSETLSLTCAVY) form a framework-1 region. The 97-residue stretch at 27–123 (QVQLQQWGAG…ADTAVYYCAR (97 aa)) folds into the Ig-like domain. Cys-48 and Cys-121 are disulfide-bonded. The interval 52-59 (GGSFSGYY) is complementarity-determining-1. Residues 60–76 (WSWIRQPPGKGLEWIGE) form a framework-2 region. The complementarity-determining-2 stretch occupies residues 77-83 (INHSGST). N-linked (GlcNAc...) asparagine glycosylation occurs at Asn-78. The framework-3 stretch occupies residues 84–121 (NYNPSLKSRVTISVDTSKNQFSLKLSSVTAADTAVYYC). A complementarity-determining-3 region spans residues 122 to 123 (AR).

In terms of assembly, immunoglobulins are composed of two identical heavy chains and two identical light chains; disulfide-linked.

Its subcellular location is the secreted. It localises to the cell membrane. In terms of biological role, v region of the variable domain of immunoglobulin heavy chains that participates in the antigen recognition. Immunoglobulins, also known as antibodies, are membrane-bound or secreted glycoproteins produced by B lymphocytes. In the recognition phase of humoral immunity, the membrane-bound immunoglobulins serve as receptors which, upon binding of a specific antigen, trigger the clonal expansion and differentiation of B lymphocytes into immunoglobulins-secreting plasma cells. Secreted immunoglobulins mediate the effector phase of humoral immunity, which results in the elimination of bound antigens. The antigen binding site is formed by the variable domain of one heavy chain, together with that of its associated light chain. Thus, each immunoglobulin has two antigen binding sites with remarkable affinity for a particular antigen. The variable domains are assembled by a process called V-(D)-J rearrangement and can then be subjected to somatic hypermutations which, after exposure to antigen and selection, allow affinity maturation for a particular antigen. In Homo sapiens (Human), this protein is Immunoglobulin heavy variable 4-34.